Reading from the N-terminus, the 453-residue chain is Divalent metal cation transporter MntH (453 aa).

Transmembrane regions (helical) follow at residues 39–59 (LAFL…GNWI), 66–86 (AQYG…AMLL), 114–134 (AIMF…AEVI), 146–166 (IPLI…LFIM), 175–195 (AIVG…VYIS), 217–237 (GILY…NLYL), 270–290 (LSIA…LFFG), 310–330 (PALG…ALLA), 362–382 (LITR…FKGN), 388–408 (QLLV…LIPL), and 427–447 (INII…YLII).

Belongs to the NRAMP family.

It is found in the cell membrane. In terms of biological role, h(+)-stimulated, divalent metal cation uptake system. The polypeptide is Divalent metal cation transporter MntH (Staphylococcus epidermidis (strain ATCC 12228 / FDA PCI 1200)).